The following is a 379-amino-acid chain: Cytochrome b (379 aa).

4 helical membrane passes run Phe-33–Met-53, Trp-77–Val-98, Trp-113–Leu-133, and Phe-178–Leu-198. Positions 83 and 97 each coordinate heme b. Heme b-binding residues include His-182 and His-196. Residue His-201 coordinates a ubiquinone. 4 helical membrane-spanning segments follow: residues Thr-226–Tyr-246, Pro-288–Gln-308, Leu-320–Gly-340, and Phe-347–Pro-367.

Belongs to the cytochrome b family. The cytochrome bc1 complex contains 11 subunits: 3 respiratory subunits (MT-CYB, CYC1 and UQCRFS1), 2 core proteins (UQCRC1 and UQCRC2) and 6 low-molecular weight proteins (UQCRH/QCR6, UQCRB/QCR7, UQCRQ/QCR8, UQCR10/QCR9, UQCR11/QCR10 and a cleavage product of UQCRFS1). This cytochrome bc1 complex then forms a dimer. The cofactor is heme b.

Its subcellular location is the mitochondrion inner membrane. Its function is as follows. Component of the ubiquinol-cytochrome c reductase complex (complex III or cytochrome b-c1 complex) that is part of the mitochondrial respiratory chain. The b-c1 complex mediates electron transfer from ubiquinol to cytochrome c. Contributes to the generation of a proton gradient across the mitochondrial membrane that is then used for ATP synthesis. In Lepilemur ruficaudatus (Red-tailed sportive lemur), this protein is Cytochrome b (MT-CYB).